Consider the following 143-residue polypeptide: Putative RNA polymerase II subunit B1 CTD phosphatase RPAP2 homolog (143 aa).

The segment at 46 to 129 adopts an RTR1-type zinc-finger fold; sequence SLLCEIGPPN…VPTSPLWLRD (84 aa). Zn(2+) contacts are provided by C69, C74, C105, and C109.

This sequence belongs to the RPAP2 family.

The protein localises to the nucleus. The enzyme catalyses O-phospho-L-seryl-[protein] + H2O = L-seryl-[protein] + phosphate. It catalyses the reaction O-phospho-L-threonyl-[protein] + H2O = L-threonyl-[protein] + phosphate. Its function is as follows. Putative RNA polymerase II subunit B1 C-terminal domain (CTD) phosphatase involved in RNA polymerase II transcription regulation. In Drosophila melanogaster (Fruit fly), this protein is Putative RNA polymerase II subunit B1 CTD phosphatase RPAP2 homolog.